The following is a 432-amino-acid chain: Adenylosuccinate lyase (432 aa).

N(6)-(1,2-dicarboxyethyl)-AMP-binding positions include 4 to 5 (RY), 67 to 69 (RHD), and 93 to 94 (TS). The active-site Proton donor/acceptor is histidine 141. Glutamine 212 lines the N(6)-(1,2-dicarboxyethyl)-AMP pocket. The Proton donor/acceptor role is filled by serine 262. N(6)-(1,2-dicarboxyethyl)-AMP is bound by residues serine 263, 268-270 (KRN), asparagine 276, and 307-311 (SAERI).

It belongs to the lyase 1 family. Adenylosuccinate lyase subfamily. In terms of assembly, homodimer and homotetramer. Residues from neighboring subunits contribute catalytic and substrate-binding residues to each active site.

It catalyses the reaction N(6)-(1,2-dicarboxyethyl)-AMP = fumarate + AMP. It carries out the reaction (2S)-2-[5-amino-1-(5-phospho-beta-D-ribosyl)imidazole-4-carboxamido]succinate = 5-amino-1-(5-phospho-beta-D-ribosyl)imidazole-4-carboxamide + fumarate. Its pathway is purine metabolism; AMP biosynthesis via de novo pathway; AMP from IMP: step 2/2. The protein operates within purine metabolism; IMP biosynthesis via de novo pathway; 5-amino-1-(5-phospho-D-ribosyl)imidazole-4-carboxamide from 5-amino-1-(5-phospho-D-ribosyl)imidazole-4-carboxylate: step 2/2. Its function is as follows. Catalyzes two reactions in de novo purine nucleotide biosynthesis. Catalyzes the breakdown of 5-aminoimidazole- (N-succinylocarboxamide) ribotide (SAICAR or 2-[5-amino-1-(5-phospho-beta-D-ribosyl)imidazole-4-carboxamido]succinate) to 5-aminoimidazole-4-carboxamide ribotide (AICAR or 5-amino-1-(5-phospho-beta-D-ribosyl)imidazole-4-carboxamide) and fumarate, and of adenylosuccinate (ADS or N(6)-(1,2-dicarboxyethyl)-AMP) to adenosine monophosphate (AMP) and fumarate. The sequence is that of Adenylosuccinate lyase (purB) from Streptococcus mutans serotype c (strain ATCC 700610 / UA159).